Here is a 188-residue protein sequence, read N- to C-terminus: MGVDIRHNKDRKVRRKEPKSQDIYLRLLVKLYRFLARRTNSTFNQVVLKRLFMSRTNRPPLSLSRMIRKMKLPGRENKTAVVVGTITDDVRVQEVPKLKVCALRVSSRARSRILKAGGKILTFDQLALDSPKGCGTVLLSGPRKGREVYRHFGKAPGTPHSHTKPYVRSKGRKFERARGRRASRGYKN.

Lys119 is covalently cross-linked (Glycyl lysine isopeptide (Lys-Gly) (interchain with G-Cter in SUMO2)). Ser130 is subject to Phosphoserine. The interval 151–188 is disordered; sequence HFGKAPGTPHSHTKPYVRSKGRKFERARGRRASRGYKN. Thr158 is subject to Phosphothreonine. Composition is skewed to basic residues over residues 161–171 and 178–188; these read SHTKPYVRSKG and RGRRASRGYKN. A Glycyl lysine isopeptide (Lys-Gly) (interchain with G-Cter in SUMO2) cross-link involves residue Lys164.

It belongs to the eukaryotic ribosomal protein eL18 family. In terms of assembly, component of the large ribosomal subunit.

The protein resides in the cytoplasm. It localises to the cytosol. The protein localises to the rough endoplasmic reticulum. Its function is as follows. Component of the large ribosomal subunit. The ribosome is a large ribonucleoprotein complex responsible for the synthesis of proteins in the cell. The chain is Large ribosomal subunit protein eL18 (RPL18) from Canis lupus familiaris (Dog).